Consider the following 366-residue polypeptide: 3-dehydroquinate synthase (366 aa).

Residues 69–74 (DGEAHK), 103–107 (GVIGD), 127–128 (TT), Lys-140, Lys-149, and 167–170 (TLNT) each bind NAD(+). Positions 182, 245, and 262 each coordinate Zn(2+).

The protein belongs to the sugar phosphate cyclases superfamily. Dehydroquinate synthase family. The cofactor is Co(2+). Requires Zn(2+) as cofactor. NAD(+) serves as cofactor.

It localises to the cytoplasm. The catalysed reaction is 7-phospho-2-dehydro-3-deoxy-D-arabino-heptonate = 3-dehydroquinate + phosphate. It functions in the pathway metabolic intermediate biosynthesis; chorismate biosynthesis; chorismate from D-erythrose 4-phosphate and phosphoenolpyruvate: step 2/7. In terms of biological role, catalyzes the conversion of 3-deoxy-D-arabino-heptulosonate 7-phosphate (DAHP) to dehydroquinate (DHQ). In Pseudomonas fluorescens (strain SBW25), this protein is 3-dehydroquinate synthase.